The primary structure comprises 134 residues: MSEKIEGIIDDLLNVEENADAIAIIGKDGQIVTQTENWNVSNDLEIINELLNEKLALGEKGITSLSIQGIKYMIVENTEERKIGTNITGKGHVLICPIPIGGPGALIAYVNPRAGPRDLLFNVQEYAKKLINLI.

A loki loop region spans residues 55–62; sequence LALGEKGI.

The protein belongs to the Asgard profilin family.

Its subcellular location is the cytoplasm. It localises to the cytoskeleton. With respect to regulation, inhibition of rabbit actin polymerization is reduced by phosphatidylinositol-(4,5)-P2(1,2-dipalmitoyl), a soluble form of the phospholipid phosphatidylinositol, suggesting an unknown lipid might regulate actin-profilin interaction in vivo. In terms of biological role, binds to actin and affects the structure of the cytoskeleton. At high concentrations inhibits spontaneous rabbit actin nucleation. This strongly suggests this archaea has a profilin-regulated actin system, and actin-type genes can be identified in this organism. In Lokiarchaeum sp. (strain GC14_75), this protein is Loki profilin-2.